The sequence spans 436 residues: UPF0597 protein YhaM (436 aa).

This sequence belongs to the UPF0597 family.

The sequence is that of UPF0597 protein YhaM from Salmonella newport (strain SL254).